The chain runs to 366 residues: Aminomethyltransferase (366 aa).

It belongs to the GcvT family. The glycine cleavage system is composed of four proteins: P, T, L and H.

It carries out the reaction N(6)-[(R)-S(8)-aminomethyldihydrolipoyl]-L-lysyl-[protein] + (6S)-5,6,7,8-tetrahydrofolate = N(6)-[(R)-dihydrolipoyl]-L-lysyl-[protein] + (6R)-5,10-methylene-5,6,7,8-tetrahydrofolate + NH4(+). The glycine cleavage system catalyzes the degradation of glycine. This Bacillus cytotoxicus (strain DSM 22905 / CIP 110041 / 391-98 / NVH 391-98) protein is Aminomethyltransferase.